Here is a 379-residue protein sequence, read N- to C-terminus: Adenylosuccinate synthetase (379 aa).

GTP-binding positions include 11-17 (GDEGKGK) and 39-41 (GHT). D12 (proton acceptor) is an active-site residue. D12 and G39 together coordinate Mg(2+). IMP is bound by residues 12 to 15 (DEGK), 37 to 40 (NAGH), T127, R141, Q223, T238, and R302. Catalysis depends on H40, which acts as the Proton donor. Residue 298 to 304 (TTTGRGR) participates in substrate binding. GTP is bound by residues R304 and 330–332 (KLD).

The protein belongs to the adenylosuccinate synthetase family. Homodimer. The cofactor is Mg(2+).

It is found in the cytoplasm. It catalyses the reaction IMP + L-aspartate + GTP = N(6)-(1,2-dicarboxyethyl)-AMP + GDP + phosphate + 2 H(+). The protein operates within purine metabolism; AMP biosynthesis via de novo pathway; AMP from IMP: step 1/2. Functionally, plays an important role in the de novo pathway of purine nucleotide biosynthesis. Catalyzes the first committed step in the biosynthesis of AMP from IMP. This chain is Adenylosuccinate synthetase, found in Methanosarcina mazei (strain ATCC BAA-159 / DSM 3647 / Goe1 / Go1 / JCM 11833 / OCM 88) (Methanosarcina frisia).